The chain runs to 317 residues: Acetyl-coenzyme A carboxylase carboxyl transferase subunit alpha (317 aa).

In terms of domain architecture, CoA carboxyltransferase C-terminal spans 40–294 (RLQKKSEELT…KARLLTDLED (255 aa)).

Belongs to the AccA family. As to quaternary structure, acetyl-CoA carboxylase is a heterohexamer composed of biotin carboxyl carrier protein (AccB), biotin carboxylase (AccC) and two subunits each of ACCase subunit alpha (AccA) and ACCase subunit beta (AccD).

The protein resides in the cytoplasm. It carries out the reaction N(6)-carboxybiotinyl-L-lysyl-[protein] + acetyl-CoA = N(6)-biotinyl-L-lysyl-[protein] + malonyl-CoA. The protein operates within lipid metabolism; malonyl-CoA biosynthesis; malonyl-CoA from acetyl-CoA: step 1/1. Functionally, component of the acetyl coenzyme A carboxylase (ACC) complex. First, biotin carboxylase catalyzes the carboxylation of biotin on its carrier protein (BCCP) and then the CO(2) group is transferred by the carboxyltransferase to acetyl-CoA to form malonyl-CoA. This chain is Acetyl-coenzyme A carboxylase carboxyl transferase subunit alpha, found in Actinobacillus succinogenes (strain ATCC 55618 / DSM 22257 / CCUG 43843 / 130Z).